The chain runs to 339 residues: Ketol-acid reductoisomerase (NADP(+)) (339 aa).

Residues 1–182 (MRVYYDRDAD…GGGRSGIIET (182 aa)) form the KARI N-terminal Rossmann domain. NADP(+) contacts are provided by residues 24–27 (YGSQ), Arg48, Ser51, Thr53, and 83–86 (DEHQ). His108 is a catalytic residue. Position 134 (Gly134) interacts with NADP(+). The region spanning 183-328 (NFREECETDL…ARLRGMMPWI (146 aa)) is the KARI C-terminal knotted domain. Mg(2+) contacts are provided by Asp191, Glu195, Glu227, and Glu231. Ser252 is a binding site for substrate.

It belongs to the ketol-acid reductoisomerase family. Mg(2+) is required as a cofactor.

It carries out the reaction (2R)-2,3-dihydroxy-3-methylbutanoate + NADP(+) = (2S)-2-acetolactate + NADPH + H(+). The catalysed reaction is (2R,3R)-2,3-dihydroxy-3-methylpentanoate + NADP(+) = (S)-2-ethyl-2-hydroxy-3-oxobutanoate + NADPH + H(+). It participates in amino-acid biosynthesis; L-isoleucine biosynthesis; L-isoleucine from 2-oxobutanoate: step 2/4. Its pathway is amino-acid biosynthesis; L-valine biosynthesis; L-valine from pyruvate: step 2/4. Its function is as follows. Involved in the biosynthesis of branched-chain amino acids (BCAA). Catalyzes an alkyl-migration followed by a ketol-acid reduction of (S)-2-acetolactate (S2AL) to yield (R)-2,3-dihydroxy-isovalerate. In the isomerase reaction, S2AL is rearranged via a Mg-dependent methyl migration to produce 3-hydroxy-3-methyl-2-ketobutyrate (HMKB). In the reductase reaction, this 2-ketoacid undergoes a metal-dependent reduction by NADPH to yield (R)-2,3-dihydroxy-isovalerate. The polypeptide is Ketol-acid reductoisomerase (NADP(+)) (Caulobacter sp. (strain K31)).